Reading from the N-terminus, the 284-residue chain is Tropomyosin (284 aa).

Residues 1-47 (MDAIKKKMQAMKIEKDNAMDRADAAEEKARQQQERVEKLEEELRDTQ) are disordered. The stretch at 1-284 (MDAIKKKMQA…DQTFQELSGY (284 aa)) forms a coiled coil. The span at 12–38 (KIEKDNAMDRADAAEEKARQQQERVEK) shows a compositional bias: basic and acidic residues.

Belongs to the tropomyosin family.

Functionally, tropomyosin, in association with the troponin complex, plays a central role in the calcium dependent regulation of muscle contraction. The chain is Tropomyosin from Trichinella spiralis (Trichina worm).